The following is a 378-amino-acid chain: Phosphoserine aminotransferase (378 aa).

Arg53 contacts L-glutamate. Pyridoxal 5'-phosphate-binding residues include Trp117, Thr167, Asp190, and Gln213. Residue Lys214 is modified to N6-(pyridoxal phosphate)lysine. 255–256 (NT) provides a ligand contact to pyridoxal 5'-phosphate.

It belongs to the class-V pyridoxal-phosphate-dependent aminotransferase family. SerC subfamily. Homodimer. The cofactor is pyridoxal 5'-phosphate.

The protein resides in the cytoplasm. The enzyme catalyses O-phospho-L-serine + 2-oxoglutarate = 3-phosphooxypyruvate + L-glutamate. It catalyses the reaction 4-(phosphooxy)-L-threonine + 2-oxoglutarate = (R)-3-hydroxy-2-oxo-4-phosphooxybutanoate + L-glutamate. The protein operates within amino-acid biosynthesis; L-serine biosynthesis; L-serine from 3-phospho-D-glycerate: step 2/3. It participates in cofactor biosynthesis; pyridoxine 5'-phosphate biosynthesis; pyridoxine 5'-phosphate from D-erythrose 4-phosphate: step 3/5. Its function is as follows. Catalyzes the reversible conversion of 3-phosphohydroxypyruvate to phosphoserine and of 3-hydroxy-2-oxo-4-phosphonooxybutanoate to phosphohydroxythreonine. The protein is Phosphoserine aminotransferase of Ralstonia pickettii (strain 12J).